A 393-amino-acid polypeptide reads, in one-letter code: 4-hydroxyphenylpyruvate dioxygenase (393 aa).

Threonine 2 carries the N-acetylthreonine modification. 2 consecutive VOC domains span residues 18–149 (HFHS…LVEK) and 180–338 (IIDH…IFTK). Residue lysine 132 is modified to N6-succinyllysine. Histidine 183 contributes to the Fe cation binding site. Residues serine 211, serine 226, and serine 250 each carry the phosphoserine modification. Histidine 266 and glutamate 349 together coordinate Fe cation.

This sequence belongs to the 4HPPD family. In terms of assembly, homodimer. Requires Fe cation as cofactor.

The protein localises to the cytoplasm. It is found in the endoplasmic reticulum membrane. The protein resides in the golgi apparatus membrane. It carries out the reaction 3-(4-hydroxyphenyl)pyruvate + O2 = homogentisate + CO2. It participates in amino-acid degradation; L-phenylalanine degradation; acetoacetate and fumarate from L-phenylalanine: step 3/6. Functionally, catalyzes the conversion of 4-hydroxyphenylpyruvic acid to homogentisic acid, one of the steps in tyrosine catabolism. The polypeptide is 4-hydroxyphenylpyruvate dioxygenase (Hpd) (Mus musculus (Mouse)).